Here is a 160-residue protein sequence, read N- to C-terminus: Protein Bel-3 (160 aa).

In terms of assembly, homodimer.

It is found in the host cytoplasm. The protein is Protein Bel-3 (bel3) of Human spumaretrovirus (SFVcpz(hu)).